Reading from the N-terminus, the 97-residue chain is NELL2-interacting cell ontogeny regulator 1 (97 aa).

An N-terminal signal peptide occupies residues 1–35 (MAPLPPCGPPRSPPPRLLLLLLLLSATLLGAPARA).

It belongs to the NICOL family. In terms of assembly, interacts with NELL2; triggers epididymal differentiation. Interacts with cell surface receptor TFRC; the interaction mediates uptake of NICOL1 into fibroblasts.

Its subcellular location is the secreted. It localises to the cytoplasm. It is found in the perinuclear region. Its function is as follows. mRNA-binding protein which interacts with a range of target mRNAs including SERPINE1, ACTA2, CCN2 and COL4A1 and may promote extracellular matrix production. Binds to the 3'-UTR of SERPINE1 mRNA and stabilizes the mRNA, possibly by competing for binding with SERBP1 and preventing SERBP1-mediated mRNA degradation. Also binds to the 3'-UTR of ACTA2. Testis-derived lumicrine factor that triggers epididymal differentiation and sperm maturation. The sequence is that of NELL2-interacting cell ontogeny regulator 1 from Bos taurus (Bovine).